A 186-amino-acid polypeptide reads, in one-letter code: MPIKSDRWIRRMALEHGMIEPFVDHQVRRGVISYGLTSYGYDMRVTDHFKVFTNVYNALVDPKQFDPRSFVDIRADYVDIPPNSFALAQSLEYFRIPRTVSCIVIGKSSYARCGIIINVTPLEPEWEGHVTIEISNTTPLPARIYAHEGIGQVLFLESDEPCEVSYADKKGKYQGQTGIVLPRIDP.

107-112 (KSSYAR) provides a ligand contact to dCTP. The active-site Proton donor/acceptor is the Glu-133. Positions 152, 166, and 176 each coordinate dCTP.

The protein belongs to the dCTP deaminase family. As to quaternary structure, homotrimer.

It carries out the reaction dCTP + H2O + H(+) = dUTP + NH4(+). It participates in pyrimidine metabolism; dUMP biosynthesis; dUMP from dCTP (dUTP route): step 1/2. Catalyzes the deamination of dCTP to dUTP. This is dCTP deaminase from Chloroflexus aurantiacus (strain ATCC 29366 / DSM 635 / J-10-fl).